A 69-amino-acid polypeptide reads, in one-letter code: Mu-conotoxin-like Am3.1 (69 aa).

An N-terminal signal peptide occupies residues 1 to 20; it reads MMSKLRVLLIICLLLFPLTA. Residues 21-52 constitute a propeptide that is removed on maturation; that stretch reads VPLDGDQPADRPAERTQDDISSEHHPMFDAVR. Residues 22–43 form a disordered region; that stretch reads PLDGDQPADRPAERTQDDISSE. Over residues 28–43 the composition is skewed to basic and acidic residues; that stretch reads PADRPAERTQDDISSE. Pro-66 carries the post-translational modification 4-hydroxyproline; partial; in minor form. Cys-68 carries the cysteine amide modification.

It belongs to the conotoxin M family. Post-translationally, mostly non-hydroxylated. In terms of processing, contains 3 disulfide bonds. Expressed by the venom duct.

Its subcellular location is the secreted. Its function is as follows. Mu-conotoxins block voltage-gated sodium channels (Nav). The chain is Mu-conotoxin-like Am3.1 from Conus amadis (Amadis cone).